The following is a 147-amino-acid chain: uncharacterized protein (147 aa).

2 consecutive transmembrane segments (helical) span residues 42–62 and 64–84; these read WASL…SPEP and LILQ…ATAF.

Its subcellular location is the cell membrane. This is an uncharacterized protein from Bacillus subtilis (strain 168).